The sequence spans 95 residues: Ferredoxin-4 (95 aa).

In terms of domain architecture, 2Fe-2S ferredoxin-type spans 2–95 (DKATLTFTDV…LGGAVKVRPA (94 aa)). Residues cysteine 38, cysteine 43, cysteine 46, and cysteine 81 each contribute to the [2Fe-2S] cluster site.

It belongs to the 2Fe2S plant-type ferredoxin family. The cofactor is [2Fe-2S] cluster.

Functionally, ferredoxins are iron-sulfur proteins that transfer electrons in a wide variety of metabolic reactions. This ferredoxin is required for nitrogen fixation. The polypeptide is Ferredoxin-4 (fdxC) (Rhodobacter capsulatus (Rhodopseudomonas capsulata)).